We begin with the raw amino-acid sequence, 450 residues long: Trehalose/maltose-binding protein MalE (450 aa).

The first 24 residues, 1–24 (MNVKKVLLGLFLVGVLGIAVVASG), serve as a signal peptide directing secretion. 14 residues coordinate alpha,alpha-trehalose: Glu-57, Thr-84, Arg-89, Asp-110, Tyr-161, Asp-163, Tyr-217, Glu-279, Trp-297, Tyr-299, Gly-334, Trp-335, Trp-371, and Arg-404.

Belongs to the bacterial solute-binding protein 1 family. In terms of assembly, the complex is composed of two ATP-binding proteins (MalK), two transmembrane proteins (MalG and MalF) and a solute-binding protein (MalE). In terms of processing, glycosylated.

Its subcellular location is the cell membrane. In terms of biological role, part of the ABC transporter complex MalEFGK involved in trehalose/maltose import. Binds maltose and trehalose. This Thermococcus litoralis (strain ATCC 51850 / DSM 5473 / JCM 8560 / NS-C) protein is Trehalose/maltose-binding protein MalE (malE).